Here is a 591-residue protein sequence, read N- to C-terminus: Cytidine monophosphate-N-acetylneuraminic acid hydroxylase (591 aa).

A Rieske domain is found at 12–110; the sequence is LEAEDVRNLK…AVLSETDGSL (99 aa). 4 residues coordinate [2Fe-2S] cluster: C52, H54, C73, and H76.

It belongs to the CMP-Neu5Ac hydroxylase family. [2Fe-2S] cluster is required as a cofactor.

The protein resides in the cytoplasm. The enzyme catalyses CMP-N-acetyl-beta-neuraminate + 2 Fe(II)-[cytochrome b5] + O2 + 2 H(+) = CMP-N-glycoloyl-beta-neuraminate + 2 Fe(III)-[cytochrome b5] + H2O. The protein operates within amino-sugar metabolism; N-acetylneuraminate metabolism. Its function is as follows. Sialic acids are components of carbohydrate chains of glycoconjugates and are involved in cell-cell recognition and cell-pathogen interactions. Catalyzes the conversion of CMP-N-acetylneuraminic acid (CMP-Neu5Ac) into its hydroxylated derivative CMP-N-glycolylneuraminic acid (CMP-Neu5Gc), a sialic acid abundantly expressed at the surface of many cells. In Danio rerio (Zebrafish), this protein is Cytidine monophosphate-N-acetylneuraminic acid hydroxylase (cmah).